A 287-amino-acid chain; its full sequence is Protoheme IX farnesyltransferase (287 aa).

8 consecutive transmembrane segments (helical) span residues 9–29 (IVTM…SATL), 31–51 (LIDW…AGAA), 94–114 (IILW…TWLI), 132–152 (VGAI…GGTL), 158–178 (WMLF…IAWL), 202–222 (AWQS…LAWF), 228–248 (VASA…WPLL), and 267–287 (LRWS…RASL).

This sequence belongs to the UbiA prenyltransferase family. Protoheme IX farnesyltransferase subfamily.

The protein resides in the cell inner membrane. The catalysed reaction is heme b + (2E,6E)-farnesyl diphosphate + H2O = Fe(II)-heme o + diphosphate. It participates in porphyrin-containing compound metabolism; heme O biosynthesis; heme O from protoheme: step 1/1. In terms of biological role, converts heme B (protoheme IX) to heme O by substitution of the vinyl group on carbon 2 of heme B porphyrin ring with a hydroxyethyl farnesyl side group. The sequence is that of Protoheme IX farnesyltransferase from Rhodopirellula baltica (strain DSM 10527 / NCIMB 13988 / SH1).